The sequence spans 138 residues: Protein E6 (138 aa).

2 zinc fingers span residues 25 to 61 (CNFCTGFLTYQELLEFDYKDFNLLWKDGFVFGCCAAC) and 98 to 134 (CLICLKRLDLLEKLDICAQHREFHRVRNRWKGVCRHC).

The protein belongs to the papillomaviridae E6 protein family. In terms of assembly, forms homodimers. Interacts with ubiquitin-protein ligase UBE3A/E6-AP; this interaction stimulates UBE3A ubiquitin activity. Interacts with host BAK1.

It is found in the host cytoplasm. Its subcellular location is the host nucleus. Its function is as follows. Plays a major role in the induction and maintenance of cellular transformation. E6 associates with host UBE3A/E6-AP ubiquitin-protein ligase and modulates its activity. Protects host keratinocytes from apoptosis by mediating the degradation of host BAK1. May also inhibit host immune response. The sequence is that of Protein E6 from Homo sapiens (Human).